The sequence spans 453 residues: Zinc finger protein Pegasus (453 aa).

3 C2H2-type zinc fingers span residues 101–123, 129–151, and 157–180; these read LKCRYCNYASKGTARLIEHIRIH, HRCHLCPFASAYERHLEAHMRSH, and YKCELCSFRCSDRSNLSHHRRRKH. The segment covering 279 to 293 has biased composition (polar residues); sequence GQLSSLPPDTQNPAS. Positions 279-375 are disordered; it reads GQLSSLPPDT…QPSTPAPALP (97 aa). A compositionally biased stretch (low complexity) spans 315-332; the sequence is CSSAVSTSVAQSSSPASP. Over residues 356 to 368 the composition is skewed to polar residues; sequence RTSTPSISNSQPS. 2 consecutive C2H2-type zinc fingers follow at residues 383–405 and 411–438; these read HHCQHCDMYFADNILYTIHMGCH and FQCNICGCKCKNKYDFACHFARGACCQH.

The protein belongs to the Ikaros C2H2-type zinc-finger protein family. In terms of assembly, probably self-associates.

The protein resides in the nucleus. Transcriptional repressor that binds the core 5'GNNTGTNG-3' DNA consensus sequence. The sequence is that of Zinc finger protein Pegasus (ikzf5) from Xenopus laevis (African clawed frog).